The primary structure comprises 345 residues: D-fructose 1,6-bisphosphatase class 2/sedoheptulose 1,7-bisphosphatase (345 aa).

Residues Asp-33, Glu-57, Asp-97, and Glu-100 each coordinate Mn(2+). Residues 100–102 (EGT), Tyr-131, 176–178 (RPR), and 198–200 (DGD) contribute to the substrate site. Residue Glu-225 coordinates Mn(2+).

Belongs to the FBPase class 2 family. In terms of assembly, homotetramer. The cofactor is Mn(2+).

The catalysed reaction is beta-D-fructose 1,6-bisphosphate + H2O = beta-D-fructose 6-phosphate + phosphate. It carries out the reaction D-sedoheptulose 1,7-bisphosphate + H2O = D-sedoheptulose 7-phosphate + phosphate. Its pathway is carbohydrate biosynthesis; Calvin cycle. Catalyzes the hydrolysis of fructose 1,6-bisphosphate (Fru 1,6-P2) and sedoheptulose 1,7-bisphosphate (Sed 1,7-P2) to fructose 6-phosphate and sedoheptulose 7-phosphate, respectively. The chain is D-fructose 1,6-bisphosphatase class 2/sedoheptulose 1,7-bisphosphatase from Synechocystis sp. (strain ATCC 27184 / PCC 6803 / Kazusa).